Here is a 411-residue protein sequence, read N- to C-terminus: Bifunctional protein GlmU (411 aa).

Residues 1-204 are pyrophosphorylase; it reads MDAIILCAGK…NGKLHGVELK (204 aa). Residues 6–9, Gln-74, and Gly-79 each bind UTP; that span reads LCAG. 4 residues coordinate N-acetyl-alpha-D-glucosamine 1-phosphate: Thr-80, Gly-130, Asn-142, and Asn-158. Residues 205-224 form a linker region; that stretch reads GYWNDIGHPWDVLSANNHFL. Residues 225–411 are N-acetyltransferase; it reads NKIISKVSGK…DELVITKKRN (187 aa). Residue His-308 is the Proton acceptor of the active site. Residues Ala-384 and Lys-401 each coordinate acetyl-CoA.

It in the N-terminal section; belongs to the N-acetylglucosamine-1-phosphate uridyltransferase family. The protein in the C-terminal section; belongs to the transferase hexapeptide repeat family.

The enzyme catalyses N-acetyl-alpha-D-glucosamine 1-phosphate + UTP + H(+) = UDP-N-acetyl-alpha-D-glucosamine + diphosphate. It carries out the reaction alpha-D-glucosamine 1-phosphate + acetyl-CoA = N-acetyl-alpha-D-glucosamine 1-phosphate + CoA + H(+). The protein operates within nucleotide-sugar biosynthesis; UDP-N-acetyl-alpha-D-glucosamine biosynthesis; N-acetyl-alpha-D-glucosamine 1-phosphate from alpha-D-glucosamine 6-phosphate (route II): step 2/2. Its pathway is nucleotide-sugar biosynthesis; UDP-N-acetyl-alpha-D-glucosamine biosynthesis; UDP-N-acetyl-alpha-D-glucosamine from N-acetyl-alpha-D-glucosamine 1-phosphate: step 1/1. Catalyzes the last two sequential reactions in the de novo biosynthetic pathway for UDP-N-acetyl-glucosamine (UDP-GlcNAc). Responsible for the acetylation of GlcN-1-P to GlcNAc-1-P, and for the uridyl transfer from UTP to GlcNAc-1-P, to produce UDP-GlcNAc and pyrophosphate. This Methanococcus maripaludis (strain DSM 14266 / JCM 13030 / NBRC 101832 / S2 / LL) protein is Bifunctional protein GlmU.